The chain runs to 342 residues: (Lyso)-N-acylphosphatidylethanolamine lipase (342 aa).

Residues Pro-70–Ala-324 enclose the AB hydrolase-1 domain.

It belongs to the peptidase S33 family. ABHD4/ABHD5 subfamily.

It catalyses the reaction N-hexadecanoyl-1,2-di-(9Z-octadecenoyl)-sn-glycero-3-phosphoethanolamine + H2O = N-hexadecanoyl-1-(9Z-octadecenoyl)-sn-glycero-3-phosphoethanolamine + (9Z)-octadecenoate + H(+). It carries out the reaction an N-acyl-1,2-diacyl-sn-glycero-3-phosphoethanolamine + H2O = N,1-diacyl-sn-glycero-3-phosphoethanolamine + a fatty acid + H(+). The enzyme catalyses N-hexadecanoyl-1-(9Z-octadecenoyl)-sn-glycero-3-phosphoethanolamine + H2O = N-hexadecanoyl-sn-glycero-3-phosphoethanolamine + (9Z)-octadecenoate + H(+). The catalysed reaction is N-octadecanoyl-1-(9Z-octadecenoyl)-sn-glycero-3-phosphoethanolamine + H2O = N-octadecanoyl-sn-glycero-3-phospho-ethanolamine + (9Z)-octadecenoate + H(+). It catalyses the reaction N-eicosanoyl-1-(9Z-octadecenoyl)-sn-glycero-3-phosphoethanolamine + H2O = N-eicosanoyl-sn-glycero-3-phosphoethanolamine + (9Z)-octadecenoate + H(+). It carries out the reaction N,1-di-(9Z-octadecenoyl)-sn-glycero-3-phosphoethanolamine + H2O = N-(9Z-octadecenoyl)-sn-glycero-3-phosphoethanolamine + (9Z)-octadecenoate + H(+). The enzyme catalyses N-(5Z,8Z,11Z,14Z-eicosatetraenoyl)-1-(9Z-octadecenoyl)-sn-glycero-3-phosphoethanolamine + H2O = N-(5Z,8Z,11Z,14Z-eicosatetraenoyl)-sn-glycero-3-phosphoethanolamine + (9Z)-octadecenoate + H(+). The catalysed reaction is 1-octadecanoyl-2-(9Z-octadecenoyl)-sn-glycero-3-phospho-(N-hexadecanoyl)-serine + H2O = 1-octadecanoyl-2-hydroxy-sn-glycero-3-phospho-(N-hexadecanoyl)-serine + (9Z)-octadecenoate + H(+). It catalyses the reaction 1-O-(1Z-octadecenoyl)-2-(9Z-octadecenoyl)-sn-glycero-3-phospho-N-hexadecanoyl-ethanolamine + H2O = 1-O-(1Z-octadecenyl)-sn-glycero-3-phospho-N-hexadecanoyl-ethanolamine + (9Z)-octadecenoate + H(+). It carries out the reaction N,1-diacyl-sn-glycero-3-phosphoethanolamine + H2O = N-acyl-sn-glycero-3-phosphoethanolamine + a fatty acid + H(+). In terms of biological role, lysophospholipase selective for N-acyl phosphatidylethanolamine (NAPE). Contributes to the biosynthesis of N-acyl ethanolamines, including the endocannabinoid anandamide by hydrolyzing the sn-1 and sn-2 acyl chains from N-acyl phosphatidylethanolamine (NAPE) generating glycerophospho-N-acyl ethanolamine (GP-NAE), an intermediate for N-acyl ethanolamine biosynthesis. Hydrolyzes substrates bearing saturated, monounsaturated, polyunsaturated N-acyl chains. Shows no significant activity towards other lysophospholipids, including lysophosphatidylcholine, lysophosphatidylethanolamine and lysophosphatidylserine. In Bos taurus (Bovine), this protein is (Lyso)-N-acylphosphatidylethanolamine lipase.